Here is a 383-residue protein sequence, read N- to C-terminus: Microtubule-associated protein tau (383 aa).

Residues 1 to 27 (MAEPRQEFDVMEDHAGTYGLGDRKDQE) are compositionally biased toward basic and acidic residues. The segment at 1-198 (MAEPRQEFDV…PVPMPDLKNV (198 aa)) is disordered. Residue alanine 2 is modified to N-acetylalanine. Phosphotyrosine occurs at positions 18 and 29. Lysine 44 participates in a covalent cross-link: Glycyl lysine isopeptide (Lys-Gly) (interchain with G-Cter in ubiquitin). A Phosphothreonine modification is found at threonine 53. The segment covering 72–91 (KSKDGTGSDDKKAKGADGKT) has biased composition (basic and acidic residues). A Phosphothreonine modification is found at threonine 95. The residue at position 97 (arginine 97) is an Omega-N-methylarginine. Lysine 105 is subject to N6,N6-dimethyllysine; alternate. Lysine 105 is subject to N6-acetyllysine; alternate. Threonine 111, threonine 117, and threonine 123 each carry phosphothreonine. Positions 116–128 (KTPPAPKTPPSSG) are enriched in pro residues. 3 positions are modified to phosphoserine: serine 127, serine 133, and serine 137. The segment covering 129 to 156 (EPPKSGDRSGYSSPGSPGTPGSRSRTPS) has biased composition (low complexity). Tyrosine 139 carries the post-translational modification Phosphotyrosine. Phosphoserine is present on residues serine 140, serine 141, and serine 144. 2 positions are modified to phosphothreonine: threonine 147 and threonine 154. Phosphoserine is present on serine 156. A Phosphothreonine modification is found at threonine 159. At lysine 167 the chain carries N6-acetyllysine. A Phosphothreonine modification is found at threonine 173. A phosphoserine mark is found at serine 177 and serine 179. Tau/MAP repeat units lie at residues 186 to 216 (QTAP…GGGK), 217 to 247 (VQII…GGGS), 248 to 278 (VQIV…GGGQ), and 279 to 310 (VEVK…GGGN). A Glycyl lysine isopeptide (Lys-Gly) (interchain with G-Cter in ubiquitin) cross-link involves residue lysine 196. Lysine 201 is subject to N6-acetyllysine; alternate. The residue at position 201 (lysine 201) is an N6-methyllysine; alternate. Lysine 201 is covalently cross-linked (Glycyl lysine isopeptide (Lys-Gly) (interchain with G-Cter in ubiquitin); alternate). Position 204 is a phosphoserine (serine 204). Lysine 209 is covalently cross-linked (Glycyl lysine isopeptide (Lys-Gly) (interchain with G-Cter in ubiquitin)). The residue at position 223 (lysine 223) is an N6-acetyllysine; alternate. Lysine 223 is covalently cross-linked (Glycyl lysine isopeptide (Lys-Gly) (interchain with G-Cter in ubiquitin); alternate). 2 positions are modified to phosphoserine: serine 227 and serine 231. Lysine 232 is modified (N6-acetyllysine). The cysteines at positions 233 and 264 are disulfide-linked. Position 235 is a phosphoserine (serine 235). Lysine 240 is modified (N6-acetyllysine; alternate). Residue lysine 240 forms a Glycyl lysine isopeptide (Lys-Gly) (interchain with G-Cter in ubiquitin); alternate linkage. Phosphoserine is present on serine 247. An N6,N6-dimethyllysine; alternate modification is found at lysine 253. N6-acetyllysine; alternate is present on residues lysine 253, lysine 259, and lysine 263. Glycyl lysine isopeptide (Lys-Gly) (interchain with G-Cter in ubiquitin); alternate cross-links involve residues lysine 253, lysine 259, and lysine 263. Phosphoserine is present on serine 266. N6-acetyllysine; alternate is present on residues lysine 273, lysine 285, and lysine 289. Glycyl lysine isopeptide (Lys-Gly) (interchain with G-Cter in ubiquitin); alternate cross-links involve residues lysine 273, lysine 285, and lysine 289. Position 291 is an omega-N-methylarginine (arginine 291). Serine 294 is subject to Phosphoserine. Lysine 295 participates in a covalent cross-link: Glycyl lysine isopeptide (Lys-Gly) (interchain with G-Cter in ubiquitin). Serine 298 is modified (phosphoserine). An N6-acetyllysine; alternate modification is found at lysine 311. A Glycyl lysine isopeptide (Lys-Gly) (interchain with G-Cter in ubiquitin); alternate cross-link involves residue lysine 311. Lysine 317 participates in a covalent cross-link: Glycyl lysine isopeptide (Lys-Gly) (interchain with G-Cter in ubiquitin). Residue lysine 327 is modified to N6-acetyllysine; alternate. Lysine 327 participates in a covalent cross-link: Glycyl lysine isopeptide (Lys-Gly) (interchain with G-Cter in ubiquitin); alternate. Tyrosine 336 bears the Phosphotyrosine mark. Serine 338 and serine 342 each carry phosphoserine. The segment at 340–359 (VVSGDTSPRHLSNVSSTGSI) is disordered. Residues 343-358 (GDTSPRHLSNVSSTGS) are compositionally biased toward polar residues. Residue threonine 345 is modified to Phosphothreonine. Residues serine 346, serine 351, serine 358, and serine 364 each carry the phosphoserine modification. Threonine 369 is subject to Phosphothreonine.

As to quaternary structure, interacts with MARK1, MARK2, MARK3 and MARK4. Interacts with SQSTM1 when polyubiquitinated. Interacts with PSMC2 through SQSTM1. Interacts with FKBP4. Binds to CSNK1D. Interacts with SGK1. Interacts with PIN1. Interacts with LRRK2. Interacts with LRP1, leading to endocytosis; this interaction is reduced in the presence of LRPAP1/RAP. Post-translationally, polyubiquitinated. Requires functional TRAF6 and may provoke SQSTM1-dependent degradation by the proteasome. Phosphorylation at various serine and threonine residues in S-P or T-P motifs by proline-directed protein kinases (PDPK1, CDK1, CDK5, GSK3, MAPK) (a few sites per protein in interphase, more in mitosis), and at serine residues in K-X-G-S motifs by MAP/microtubule affinity-regulating kinase (MARK1, MARK2, MARK3 or MARK4), causing detachment from microtubules, and their disassembly. Phosphorylation at Ser-204 by BRSK1 and BRSK2 in neurons affects ability to bind microtubules and plays a role in neuron polarization. Phosphorylated by PHK. Dephosphorylation at several serine and threonine residues by the serine/threonine phosphatase PPP5C. Expressed in neurons.

The protein localises to the cytoplasm. The protein resides in the cytosol. It localises to the cell membrane. It is found in the cytoskeleton. Its subcellular location is the cell projection. The protein localises to the axon. The protein resides in the dendrite. Its function is as follows. Promotes microtubule assembly and stability, and might be involved in the establishment and maintenance of neuronal polarity. The C-terminus binds axonal microtubules while the N-terminus binds neural plasma membrane components, suggesting that tau functions as a linker protein between both. Axonal polarity is predetermined by tau localization (in the neuronal cell) in the domain of the cell body defined by the centrosome. The chain is Microtubule-associated protein tau (MAPT) from Papio hamadryas (Hamadryas baboon).